Consider the following 662-residue polypeptide: Glycogen debranching enzyme (662 aa).

The Nucleophile role is filled by Asp338. Glu373 serves as the catalytic Proton donor.

The protein belongs to the glycosyl hydrolase 13 family.

The enzyme catalyses Hydrolysis of (1-&gt;6)-alpha-D-glucosidic linkages to branches with degrees of polymerization of three or four glucose residues in limit dextrin.. Its pathway is glycan degradation; glycogen degradation. Its function is as follows. Removes maltotriose and maltotetraose chains that are attached by 1,6-alpha-linkage to the limit dextrin main chain, generating a debranched limit dextrin. The sequence is that of Glycogen debranching enzyme from Yersinia pestis bv. Antiqua (strain Angola).